The sequence spans 189 residues: Glycerol-3-phosphate acyltransferase (189 aa).

Transmembrane regions (helical) follow at residues methionine 1–leucine 21, glutamine 79–phenylalanine 99, leucine 113–phenylalanine 133, and leucine 151–valine 171.

This sequence belongs to the PlsY family. As to quaternary structure, probably interacts with PlsX.

Its subcellular location is the cell inner membrane. The enzyme catalyses an acyl phosphate + sn-glycerol 3-phosphate = a 1-acyl-sn-glycero-3-phosphate + phosphate. The protein operates within lipid metabolism; phospholipid metabolism. Catalyzes the transfer of an acyl group from acyl-phosphate (acyl-PO(4)) to glycerol-3-phosphate (G3P) to form lysophosphatidic acid (LPA). This enzyme utilizes acyl-phosphate as fatty acyl donor, but not acyl-CoA or acyl-ACP. This is Glycerol-3-phosphate acyltransferase from Azotobacter vinelandii (strain DJ / ATCC BAA-1303).